The sequence spans 176 residues: Vitamin K epoxide reductase complex subunit 1-like protein 1 (176 aa).

The Cytoplasmic segment spans residues 1-13 (MAAPVLLRVSVPR). The helical transmembrane segment at 14 to 36 (WERVARYAVCAAGILLSIYAYHV) threads the bilayer. Residues 37–87 (EREKERDPEHRALCDLGPWVKCSAALASRWGRGFGLLGSIFGKDGVLNQPN) lie on the Lumenal side of the membrane. Residues C50 and C58 are joined by a disulfide bond. N87 contributes to the (S)-warfarin binding site. The helical transmembrane segment at 88-102 (SVFGLIFYILQLLLG) threads the bilayer. The Cytoplasmic segment spans residues 103 to 107 (MTASA). Residues 108 to 135 (VAALILMTSSIMSVVGSLYLAYILYFVL) form a helical membrane-spanning segment. Over 136–138 (KEF) the chain is Lumenal. A disulfide bridge connects residues C139 and C142. Residues 139–160 (CIICIVTYVLNFLLLIINYKRL) traverse the membrane as a helical segment. Residues C142 and Y146 each contribute to the phylloquinone site. Y146 provides a ligand contact to (S)-warfarin. At 161–176 (VYLNEAWKRQLQPKQD) the chain is on the cytoplasmic side.

It belongs to the VKOR family.

The protein resides in the endoplasmic reticulum membrane. It carries out the reaction phylloquinone + [protein]-disulfide + H2O = 2,3-epoxyphylloquinone + [protein]-dithiol. The enzyme catalyses phylloquinol + [protein]-disulfide = phylloquinone + [protein]-dithiol. With respect to regulation, inhibited by warfarin (coumadin). Warfarin locks VKORC1 in both redox states into the closed conformation. In terms of biological role, involved in vitamin K metabolism. Can reduce inactive vitamin K 2,3-epoxide to active vitamin K, and may contribute to vitamin K-mediated protection against oxidative stress. Plays a role in vitamin K-dependent gamma-carboxylation of Glu residues in target proteins. The protein is Vitamin K epoxide reductase complex subunit 1-like protein 1 (VKORC1L1) of Homo sapiens (Human).